We begin with the raw amino-acid sequence, 209 residues long: Max dimerization protein 4 (209 aa).

The segment at 6-23 (LLLLLEAAEYLERRDREA) is interaction with SIN3A and SIN3B. Residues 53–105 (NNRSSHNELEKHRRAKLRLYLEQLKQLGPLGPDSTRHTTLSLLKRAKMHIKKL) form the bHLH domain. Positions 137–209 (SVERVRTDST…CRRPGCPGLS (73 aa)) are disordered. Over residues 153–163 (DDSEQEVDIEG) the composition is skewed to acidic residues. Residues 185 to 195 (SLQSSGCSDSS) are compositionally biased toward polar residues.

As to quaternary structure, efficient DNA binding requires dimerization with another bHLH protein. Binds DNA as a heterodimer with MAX. Interacts with SIN3A AND SIN3B. Interacts with RNF17.

It is found in the nucleus. In terms of biological role, transcriptional repressor. Binds with MAX to form a sequence-specific DNA-binding protein complex which recognizes the core sequence 5'-CAC[GA]TG-3'. Antagonizes MYC transcriptional activity by competing for MAX and suppresses MYC dependent cell transformation. The polypeptide is Max dimerization protein 4 (Mxd4) (Mus musculus (Mouse)).